A 327-amino-acid chain; its full sequence is D-alanine--D-alanine ligase (327 aa).

Residues 113–312 enclose the ATP-grasp domain; that stretch reads KRLWMTHDLS…YEDFVMQVVA (200 aa). Residue 139–194 participates in ATP binding; that stretch reads VADLGLPLIVKPAREGSSIGLSKVTDASQMREAFEKAAALDNDVIAETFIDGAELT. Residues Asp-266, Glu-279, and Asn-281 each contribute to the Mg(2+) site.

This sequence belongs to the D-alanine--D-alanine ligase family. Mg(2+) is required as a cofactor. It depends on Mn(2+) as a cofactor.

Its subcellular location is the cytoplasm. The catalysed reaction is 2 D-alanine + ATP = D-alanyl-D-alanine + ADP + phosphate + H(+). The protein operates within cell wall biogenesis; peptidoglycan biosynthesis. Functionally, cell wall formation. The sequence is that of D-alanine--D-alanine ligase from Cupriavidus pinatubonensis (strain JMP 134 / LMG 1197) (Cupriavidus necator (strain JMP 134)).